Here is a 736-residue protein sequence, read N- to C-terminus: Replication restart protein PriA (736 aa).

One can recognise a Helicase ATP-binding domain in the interval 230–396 (DFKGNISKEN…KEGRIRTFNF (167 aa)). 243-250 (GPTGSGKT) provides a ligand contact to ATP. Residues 339–342 (DEEH) carry the DEAH box motif. Cysteine 452, cysteine 455, cysteine 461, cysteine 464, cysteine 479, cysteine 482, cysteine 492, and cysteine 495 together coordinate Zn(2+). One can recognise a Helicase C-terminal domain in the interval 487-643 (GLVESCPRCG…EELERRKALG (157 aa)).

This sequence belongs to the helicase family. PriA subfamily. Component of the replication restart primosome. Zn(2+) is required as a cofactor.

It carries out the reaction Couples ATP hydrolysis with the unwinding of duplex DNA by translocating in the 3'-5' direction.. The catalysed reaction is ATP + H2O = ADP + phosphate + H(+). Its function is as follows. Initiates the restart of stalled replication forks, which reloads the replicative helicase on sites other than the origin of replication. Recognizes and binds to abandoned replication forks and remodels them to uncover a helicase loading site. Promotes assembly of the primosome at these replication forks. This Thermotoga maritima (strain ATCC 43589 / DSM 3109 / JCM 10099 / NBRC 100826 / MSB8) protein is Replication restart protein PriA.